Here is a 502-residue protein sequence, read N- to C-terminus: MKKSSKEISSSQSLKNGGSDHFFNTSLMYVLAACLASFIFGYQVSVLNTIKNFIVIEFGWCTGNKVECDDSTLKSSFLLASVFIGAVVGSGFSGYLVQHGRRFSLLVIYNFFILVSILTSITHHFHTILFSRLLSGFGIGLITVSVPMYISEMTHKDKKGAYGVLHQLFITFGIFVAVLLGMAMGEAPDAKSVDALGEFQKIWWRLMFFFPCLISILGIVLLTFFYKEETPYYLFENGKIEESKKILKKIYGTDNVDEPLKAIKDAVEQNEAAKKNSISLMRAMQIPSYRNVILLGCILSGLQQFTGINVLVSNSNELYKEFLSNKLITTLSVIMTVVNFLMTFPAIYIVEKLGRKTLLLCGCAGVICAFLPTAIANQIDSTSAFVKNLSIAATFVMIISFAVSYGPVLWIYLHEMFPSEIKDSAASLASLVNWVCAIIVVFPSDIIIKKSPTILFFIFSGMSILSFLFIFFFIKETKGGEIGTSPYITMEERQKHMGKSAV.

Topologically, residues 1 to 26 (MKKSSKEISSSQSLKNGGSDHFFNTS) are cytoplasmic. The helical transmembrane segment at 27-47 (LMYVLAACLASFIFGYQVSVL) threads the bilayer. Residues 48-76 (NTIKNFIVIEFGWCTGNKVECDDSTLKSS) lie on the Extracellular side of the membrane. Cysteines 61 and 68 form a disulfide. Residues 77-97 (FLLASVFIGAVVGSGFSGYLV) form a helical membrane-spanning segment. At 98-102 (QHGRR) the chain is on the cytoplasmic side. A helical transmembrane segment spans residues 103–123 (FSLLVIYNFFILVSILTSITH). At 124-132 (HFHTILFSR) the chain is on the extracellular side. A helical transmembrane segment spans residues 133-153 (LLSGFGIGLITVSVPMYISEM). The Cytoplasmic segment spans residues 154–163 (THKDKKGAYG). The helical transmembrane segment at 164 to 184 (VLHQLFITFGIFVAVLLGMAM) threads the bilayer. An alpha-D-glucose-binding site is contributed by glutamine 167. Glutamine 167 contributes to the beta-D-glucose binding site. Topologically, residues 185–205 (GEAPDAKSVDALGEFQKIWWR) are extracellular. Residues 206–226 (LMFFFPCLISILGIVLLTFFY) form a helical membrane-spanning segment. The Cytoplasmic segment spans residues 227–291 (KEETPYYLFE…RAMQIPSYRN (65 aa)). Residues 292–312 (VILLGCILSGLQQFTGINVLV) form a helical membrane-spanning segment. Alpha-D-glucose is bound by residues glutamine 303, glutamine 304, and asparagine 309. Glutamine 303 contacts beta-D-glucose. Residue asparagine 309 participates in beta-D-glucose binding. The Extracellular segment spans residues 313-329 (SNSNELYKEFLSNKLIT). A helical membrane pass occupies residues 330–350 (TLSVIMTVVNFLMTFPAIYIV). Asparagine 339 lines the beta-D-glucose pocket. Over 351-356 (EKLGRK) the chain is Cytoplasmic. Residues 357–377 (TLLLCGCAGVICAFLPTAIAN) form a helical membrane-spanning segment. At 378 to 390 (QIDSTSAFVKNLS) the chain is on the extracellular side. The chain crosses the membrane as a helical span at residues 391 to 411 (IAATFVMIISFAVSYGPVLWI). Tryptophan 410 provides a ligand contact to alpha-D-glucose. Residues 412–427 (YLHEMFPSEIKDSAAS) lie on the Cytoplasmic side of the membrane. The helical transmembrane segment at 428-448 (LASLVNWVCAIIVVFPSDIII) threads the bilayer. Residues 449 to 453 (KKSPT) lie on the Extracellular side of the membrane. The chain crosses the membrane as a helical span at residues 454-474 (ILFFIFSGMSILSFLFIFFFI). Residues 475-502 (KETKGGEIGTSPYITMEERQKHMGKSAV) lie on the Cytoplasmic side of the membrane.

Belongs to the major facilitator superfamily. Sugar transporter (TC 2.A.1.1) family. Homodimer.

Its subcellular location is the cell membrane. It catalyses the reaction D-glucose(out) = D-glucose(in). The enzyme catalyses D-fructose(out) = D-fructose(in). It carries out the reaction D-galactose(in) = D-galactose(out). The catalysed reaction is D-mannose(out) = D-mannose(in). It catalyses the reaction D-glucosamine(out) = D-glucosamine(in). The enzyme catalyses D-xylose(out) = D-xylose(in). With respect to regulation, inhibited by compound 3361 (3-O-((undec-10-en)-1-yl)-D-glucose). Its function is as follows. Sodium-independent facilitative hexose transporter. Can transport D-glucose and D-fructose. Can transport D-mannose, D-galactose, D-xylose and D-glucosamine. The protein is Hexose transporter 1 of Plasmodium vivax (strain Brazil I).